The following is an 844-amino-acid chain: Bifunctional abietadiene synthase, chloroplastic (844 aa).

A chloroplast-targeting transit peptide spans 1-46; it reads QSIPHFSTTLNAGSSARKRRSLYLRWGKGSNKIIACVGEGATSVPY. Position 245 (lysine 245) interacts with substrate. Residues aspartate 378 and aspartate 380 each coordinate Mg(2+). Positions 378 to 381 match the DXDD motif motif; it reads DIDD. Substrate is bound at residue lysine 465. Mg(2+)-binding residues include aspartate 597, aspartate 601, asparagine 741, threonine 745, and glutamate 749. The short motif at 597–601 is the DDXXD motif element; the sequence is DDLYD.

This sequence belongs to the terpene synthase family. Tpsd subfamily. Monomer. Mg(2+) serves as cofactor.

It localises to the plastid. The protein localises to the chloroplast. The catalysed reaction is (2E,6E,10E)-geranylgeranyl diphosphate = (+)-copalyl diphosphate. It carries out the reaction (+)-copalyl diphosphate = abieta-7,13-diene + diphosphate. The enzyme catalyses (+)-copalyl diphosphate = neoabietadiene + diphosphate. It catalyses the reaction (+)-copalyl diphosphate = abieta-8(14),12-diene + diphosphate. It functions in the pathway terpene metabolism; oleoresin biosynthesis. Functionally, involved in defensive oleoresin formation in conifers in response to insect attack or other injury. Involved in diterpene (C20) olefins biosynthesis. Bifunctional enzyme that catalyzes two sequential cyclizations of geranylgeranyl diphosphate (GGPP) to abietadiene. The copalyl diphosphate (CPP) intermediate diffuses freely between the 2 active sites in the enzyme. The polypeptide is Bifunctional abietadiene synthase, chloroplastic (LAS) (Abies balsamea (Balsam fir)).